The sequence spans 353 residues: Photosystem II D2 protein (353 aa).

Residue T2 is modified to N-acetylthreonine. T2 is subject to Phosphothreonine. Residues 41–61 (CAYFAVGGWFTGTTFVTSWYT) traverse the membrane as a helical segment. H118 lines the chlorophyll a pocket. Residues 125-141 (GFMLRQFELARSVQLRP) traverse the membrane as a helical segment. Pheophytin a contacts are provided by Q130 and N143. The helical transmembrane segment at 153–166 (VFVSVFLIYPLGQS) threads the bilayer. Position 198 (H198) interacts with chlorophyll a. The helical transmembrane segment at 208–228 (AALLCAIHGATVENTLFEDGD) threads the bilayer. A plastoquinone is bound by residues H215 and F262. A Fe cation-binding site is contributed by H215. Residue H269 participates in Fe cation binding. A helical transmembrane segment spans residues 279–295 (GLWMSALGVVGLALNLR).

This sequence belongs to the reaction center PufL/M/PsbA/D family. In terms of assembly, PSII is composed of 1 copy each of membrane proteins PsbA, PsbB, PsbC, PsbD, PsbE, PsbF, PsbH, PsbI, PsbJ, PsbK, PsbL, PsbM, PsbT, PsbX, PsbY, PsbZ, Psb30/Ycf12, at least 3 peripheral proteins of the oxygen-evolving complex and a large number of cofactors. It forms dimeric complexes. The cofactor is The D1/D2 heterodimer binds P680, chlorophylls that are the primary electron donor of PSII, and subsequent electron acceptors. It shares a non-heme iron and each subunit binds pheophytin, quinone, additional chlorophylls, carotenoids and lipids. There is also a Cl(-1) ion associated with D1 and D2, which is required for oxygen evolution. The PSII complex binds additional chlorophylls, carotenoids and specific lipids..

Its subcellular location is the plastid. The protein localises to the chloroplast thylakoid membrane. The enzyme catalyses 2 a plastoquinone + 4 hnu + 2 H2O = 2 a plastoquinol + O2. Its function is as follows. Photosystem II (PSII) is a light-driven water:plastoquinone oxidoreductase that uses light energy to abstract electrons from H(2)O, generating O(2) and a proton gradient subsequently used for ATP formation. It consists of a core antenna complex that captures photons, and an electron transfer chain that converts photonic excitation into a charge separation. The D1/D2 (PsbA/PsbD) reaction center heterodimer binds P680, the primary electron donor of PSII as well as several subsequent electron acceptors. D2 is needed for assembly of a stable PSII complex. The chain is Photosystem II D2 protein from Solanum bulbocastanum (Wild potato).